Consider the following 671-residue polypeptide: DNA ligase (671 aa).

Residues Asp32–Asp36, Ser81–Leu82, and Glu113 contribute to the NAD(+) site. The active-site N6-AMP-lysine intermediate is the Lys115. Arg136, Glu173, Lys290, and Lys314 together coordinate NAD(+). Zn(2+) is bound by residues Cys408, Cys411, Cys426, and Cys432. Residues Glu593 to Glu671 enclose the BRCT domain.

The protein belongs to the NAD-dependent DNA ligase family. LigA subfamily. Requires Mg(2+) as cofactor. The cofactor is Mn(2+).

The catalysed reaction is NAD(+) + (deoxyribonucleotide)n-3'-hydroxyl + 5'-phospho-(deoxyribonucleotide)m = (deoxyribonucleotide)n+m + AMP + beta-nicotinamide D-nucleotide.. DNA ligase that catalyzes the formation of phosphodiester linkages between 5'-phosphoryl and 3'-hydroxyl groups in double-stranded DNA using NAD as a coenzyme and as the energy source for the reaction. It is essential for DNA replication and repair of damaged DNA. The polypeptide is DNA ligase (Enterobacter sp. (strain 638)).